The chain runs to 205 residues: Lymphotoxin-alpha (205 aa).

The first 34 residues, 1-34 (MTPPERLFLPRVCGTTLHLLLLGLLLVLLPGAQG), serve as a signal peptide directing secretion. The O-linked (GalNAc...) threonine; partial glycan is linked to Thr41. Positions 63–205 (PAAHLIGDPS…STVFFGAFAL (143 aa)) constitute a THD domain. Asn96 carries an N-linked (GlcNAc...) asparagine glycan.

This sequence belongs to the tumor necrosis factor family. Homotrimer, and heterotrimer of either two LTB and one LTA subunits or (less prevalent) two LTA and one LTB subunits. Interacts with TNFRSF14.

Its subcellular location is the secreted. It localises to the membrane. Its function is as follows. Cytokine that in its homotrimeric form binds to TNFRSF1A/TNFR1, TNFRSF1B/TNFBR and TNFRSF14/HVEM. In its heterotrimeric form with LTB binds to TNFRSF3/LTBR. Lymphotoxin is produced by lymphocytes and is cytotoxic for a wide range of tumor cells in vitro and in vivo. The polypeptide is Lymphotoxin-alpha (LTA) (Homo sapiens (Human)).